A 349-amino-acid chain; its full sequence is Ferredoxin--NADP reductase (349 aa).

Asp35, Gln43, Tyr48, Val88, Phe123, Asp288, and Thr329 together coordinate FAD.

The protein belongs to the ferredoxin--NADP reductase type 2 family. As to quaternary structure, homodimer. It depends on FAD as a cofactor.

It catalyses the reaction 2 reduced [2Fe-2S]-[ferredoxin] + NADP(+) + H(+) = 2 oxidized [2Fe-2S]-[ferredoxin] + NADPH. The polypeptide is Ferredoxin--NADP reductase (Colwellia psychrerythraea (strain 34H / ATCC BAA-681) (Vibrio psychroerythus)).